A 1132-amino-acid chain; its full sequence is Cytospin-A (1132 aa).

Residues 1–166 (MKKAGRPVGN…SKSDGQLSDK (166 aa)) are disordered. 2 stretches are compositionally biased toward low complexity: residues 73–109 (STHSTSCGTNTNNPDTKTKTTSGPSGKRTTSMTSKES) and 119–129 (SRNSSSKKQSS). Positions 150–159 (SESRMSKSKS) are enriched in basic and acidic residues. Positions 226 to 268 (DVESTLLLLQEQNQAIRGELNLLKNENRMLKDRLNALGFSLEQ) form a coiled coil. The tract at residues 301-381 (ASSVEGSAPG…RKGSSGNTSE (81 aa)) is disordered. Positions 333 to 343 (SEVYQAVTSSD) are enriched in polar residues. The segment covering 348–377 (APSGCGSSSSSESEGGPPACRSSSRKGSSG) has biased composition (low complexity). Coiled-coil stretches lie at residues 385 to 440 (ACLT…MDSL) and 478 to 798 (RYME…RGRV). Disordered stretches follow at residues 869-895 (TSTTPTAPLPRTPLSPSPMKTPPAAAV) and 939-1016 (SRPA…RKDP). Positions 875–889 (APLPRTPLSPSPMKT) are enriched in pro residues. Residues 946–961 (QRVSNMDTSKTITVSR) are compositionally biased toward polar residues. The span at 962-972 (RSSEEPKRDIS) shows a compositional bias: basic and acidic residues. Low complexity predominate over residues 979-1000 (ASSLISMSSAAALSSSSSPTAS). The region spanning 1026–1131 (GSKRNALLRW…YVTSIYKYFE (106 aa)) is the Calponin-homology (CH) domain.

It belongs to the cytospin-A family. May interact with both microtubules and actin cytoskeleton.

The protein resides in the cytoplasm. It is found in the cytoskeleton. It localises to the spindle. The protein localises to the cell junction. Its subcellular location is the gap junction. In terms of biological role, involved in cytokinesis and spindle organization. May play a role in actin cytoskeleton organization and microtubule stabilization and hence required for proper cell adhesion and migration. In Danio rerio (Zebrafish), this protein is Cytospin-A (specc1la).